We begin with the raw amino-acid sequence, 859 residues long: Linoleate 9S-lipoxygenase B (859 aa).

The region spanning 34–158 (INIGASVVDG…RYKSDRIFFA (125 aa)) is the PLAT domain. The 699-residue stretch at 161 to 859 (AYLPSETPQP…GKGIPNSVSI (699 aa)) folds into the Lipoxygenase domain. A disordered region spans residues 213-246 (EYARPILGGSSEYPYPRRGRTGREPTKADPNCES). Basic and acidic residues predominate over residues 233-244 (TGREPTKADPNC). Fe cation-binding residues include histidine 521, histidine 526, histidine 711, and isoleucine 859.

Belongs to the lipoxygenase family. As to quaternary structure, monomer. The cofactor is Fe cation. Fruit specific.

The protein resides in the cytoplasm. The enzyme catalyses (9Z,12Z)-octadecadienoate + O2 = (9S)-hydroperoxy-(10E,12Z)-octadecadienoate. The protein operates within lipid metabolism; oxylipin biosynthesis. Plant lipoxygenase may be involved in a number of diverse aspects of plant physiology including growth and development, pest resistance, and senescence or responses to wounding. It catalyzes the hydroperoxidation of lipids containing a cis,cis-1,4-pentadiene structure. The polypeptide is Linoleate 9S-lipoxygenase B (LOX1.2) (Solanum lycopersicum (Tomato)).